A 187-amino-acid polypeptide reads, in one-letter code: UPF0398 protein SAB1311c (187 aa).

It belongs to the UPF0398 family.

This Staphylococcus aureus (strain bovine RF122 / ET3-1) protein is UPF0398 protein SAB1311c.